The following is a 487-amino-acid chain: N-succinylglutamate 5-semialdehyde dehydrogenase (487 aa).

An NAD(+)-binding site is contributed by 221-226 (GSSRTG). Catalysis depends on residues glutamate 244 and cysteine 278.

This sequence belongs to the aldehyde dehydrogenase family. AstD subfamily.

It carries out the reaction N-succinyl-L-glutamate 5-semialdehyde + NAD(+) + H2O = N-succinyl-L-glutamate + NADH + 2 H(+). It functions in the pathway amino-acid degradation; L-arginine degradation via AST pathway; L-glutamate and succinate from L-arginine: step 4/5. Functionally, catalyzes the NAD-dependent reduction of succinylglutamate semialdehyde into succinylglutamate. In Pseudomonas putida (strain GB-1), this protein is N-succinylglutamate 5-semialdehyde dehydrogenase.